We begin with the raw amino-acid sequence, 262 residues long: MEGGRLGCAVCVLTGASRGFGRALAPQLAGLLSPGSVLLLSARSDSMLRQLKEELCTQQPGLQVVLAAADLGTESGVQQLLSAVRELPRPERLQRLLLINNAGTLGDVSKGFLNINDLAEVNNYWALNLTSMLCLTTGTLNAFSNSPGLSKTVVNISSLCALQPFKGWGLYCAGKAARDMLYQVLAVEEPSVRVLSYAPGPLDTNMQQLARETSMDPELRSRLQKLNSEGELVDCGTSAQKLLSLLQRDTFQSGAHVDFYDI.

At methionine 1 the chain carries N-acetylmethionine. NADP(+) is bound at residue 15–21; that stretch reads GASRGFG. Serine 33 carries the phosphoserine modification. An NADP(+)-binding site is contributed by 43–44; sequence RS. Serine 46 carries the phosphoserine; by CaMK2; in vitro modification. 70-71 serves as a coordination point for NADP(+); that stretch reads DL. Substrate-binding positions include 158–159 and tyrosine 171; that span reads SL. Residue lysine 175 coordinates NADP(+). Position 196 is a phosphoserine; by CaMK2; in vitro (serine 196). Glycine 200 serves as a coordination point for substrate. An NADP(+)-binding site is contributed by 202 to 207; the sequence is LDTNMQ. Position 214 is a phosphoserine; by CaMK2; in vitro (serine 214). Residue aspartate 258 participates in substrate binding.

It belongs to the sepiapterin reductase family. As to quaternary structure, homodimer. Post-translationally, in vitro phosphorylation of Ser-46, Ser-196 and Ser-214 by CaMK2 does not change kinetic parameters.

It localises to the cytoplasm. The catalysed reaction is L-erythro-7,8-dihydrobiopterin + NADP(+) = L-sepiapterin + NADPH + H(+). It carries out the reaction (6R)-L-erythro-5,6,7,8-tetrahydrobiopterin + 2 NADP(+) = 6-pyruvoyl-5,6,7,8-tetrahydropterin + 2 NADPH + 2 H(+). Functionally, catalyzes the final one or two reductions in tetra-hydrobiopterin biosynthesis to form 5,6,7,8-tetrahydrobiopterin. The chain is Sepiapterin reductase (Spr) from Rattus norvegicus (Rat).